Here is a 999-residue protein sequence, read N- to C-terminus: Probable metabotropic glutamate receptor mgl-1 (999 aa).

Residues Ser-202, 223–225 (AST), Tyr-273, Glu-363, and Lys-455 each bind L-glutamate. Asn-518 is a glycosylation site (N-linked (GlcNAc...) asparagine). 7 consecutive transmembrane segments (helical) span residues 682–704 (SLVP…VVYV), 719–739 (LSYI…VLLS), 751–769 (TGIG…VKTN), 792–812 (VVMT…WLSV), 836–857 (HHFL…TYAV), 871–893 (FIGF…FFGT), and 904–929 (LCIS…IILF). The segment at 975 to 999 (DSTRRRSSRKTSQPTSTSSAHDTFL) is disordered. Positions 984–993 (KTSQPTSTSS) are enriched in low complexity.

This sequence belongs to the G-protein coupled receptor 3 family.

Its subcellular location is the cell membrane. G-protein coupled receptor for glutamate. Ligand binding causes a conformation change that triggers signaling via guanine nucleotide-binding proteins (G proteins) and modulates the activity of down-stream effectors. In Caenorhabditis elegans, this protein is Probable metabotropic glutamate receptor mgl-1 (mgl-1).